The chain runs to 780 residues: Cyclin-F (780 aa).

The short motif at 20-28 is the Nuclear localization signal 1 element; sequence KRRIKRRPR. In terms of domain architecture, F-box spans 29-76; the sequence is NLTILSLPEDVLFHILKWLSVGDILAVRAVHSHLKYLVDNHASVWASA. In terms of domain architecture, Cyclin N-terminal spans 288-405; the sequence is QASQAVNKQQ…EIISALEGKI (118 aa). Short sequence motifs (d box) lie at residues 310 to 313, 343 to 346, and 349 to 352; these read RYIL, RRRL, and RYKL. Disordered regions lie at residues 544-594, 651-733, and 745-780; these read QESP…AELS, QESS…STKP, and CRPP…FLKL. The Nuclear localization signal 2 motif lies at 568–574; that stretch reads RRSKRKR. Positions 582-761 are PEST; it reads RGSFVTTPTA…ESGAHQQPVK (180 aa). Polar residues predominate over residues 585-594; the sequence is FVTTPTAELS. 2 stretches are compositionally biased toward low complexity: residues 695–708 and 719–731; these read SGYS…PISS and STSV…HSST. The short motif at 762–765 is the D box 4 element; that stretch reads RQNL.

Belongs to the cyclin family. Cyclin AB subfamily. As to quaternary structure, component of the SCF(CCNF) complex consisting of CUL1, RBX1, SKP1 and CCNF. Interacts with SKP1. Interacts with CUL1. Interacts with CCNB1; interaction is required for nuclear localization of CCNB1. Interacts with CCP110; this interaction leads to CCP110 ubiquitination and degradation via the proteasome pathway. Interacts (via the Cyclin N-terminal domain) with MYBL2/BMYB. Interacts with FZR1/CDH1 (via N-terminus). Interacts with RRM2 (via Cy motif and when phosphorylated at 'Thr-33'); the interaction occurs exclusively in G2 and early M. Interacts with CDC6 (via Cy motif); the interaction takes place during G2 and M phase. In terms of processing, degraded when the spindle assembly checkpoint is activated during the G2-M transition. Degradation is not dependent on the proteasome or ubiquitin and depends on the C-terminal PEST sequence. Post-translationally, phosphorylated just before cells enter into mitosis. Ubiquitinated by the anaphase-promoting complex (APC/C); leading to its degradation by the proteasome.

It is found in the nucleus. The protein resides in the cytoplasm. The protein localises to the perinuclear region. It localises to the cytoskeleton. Its subcellular location is the microtubule organizing center. It is found in the centrosome. The protein resides in the centriole. Substrate recognition component of a SCF (SKP1-CUL1-F-box protein) E3 ubiquitin-protein ligase complex which mediates the ubiquitination and subsequent proteasomal degradation of target proteins. The SCF(CCNF) E3 ubiquitin-protein ligase complex is an integral component of the ubiquitin proteasome system (UPS) and links proteasome degradation to the cell cycle. Mediates the substrate recognition and the proteasomal degradation of various target proteins involved in the regulation of cell cycle progression and in the maintenance of genome stability. Mediates the ubiquitination and subsequent proteasomal degradation of CP110 during G2 phase, thereby acting as an inhibitor of centrosome reduplication. In G2, mediates the ubiquitination and proteasomal degradation of CDC6, thereby suppressing DNA re-replication and preventing genome instability. Involved in the ubiquitination and degradation of the substrate adapter CDH1 of the anaphase-promoting complex (APC/C), thereby acting as an antagonist of APC/C in regulating G1 progression and S phase entry. May play a role in the G2 cell cycle checkpoint control after DNA damage, possibly by promoting the ubiquitination of MYBL2/BMYB. The chain is Cyclin-F (Ccnf) from Rattus norvegicus (Rat).